Reading from the N-terminus, the 258-residue chain is Imidazole glycerol phosphate synthase subunit HisF (258 aa).

Residues D12 and D131 contribute to the active site.

This sequence belongs to the HisA/HisF family. In terms of assembly, heterodimer of HisH and HisF.

The protein localises to the cytoplasm. It carries out the reaction 5-[(5-phospho-1-deoxy-D-ribulos-1-ylimino)methylamino]-1-(5-phospho-beta-D-ribosyl)imidazole-4-carboxamide + L-glutamine = D-erythro-1-(imidazol-4-yl)glycerol 3-phosphate + 5-amino-1-(5-phospho-beta-D-ribosyl)imidazole-4-carboxamide + L-glutamate + H(+). It participates in amino-acid biosynthesis; L-histidine biosynthesis; L-histidine from 5-phospho-alpha-D-ribose 1-diphosphate: step 5/9. Its function is as follows. IGPS catalyzes the conversion of PRFAR and glutamine to IGP, AICAR and glutamate. The HisF subunit catalyzes the cyclization activity that produces IGP and AICAR from PRFAR using the ammonia provided by the HisH subunit. The sequence is that of Imidazole glycerol phosphate synthase subunit HisF from Nitrosomonas eutropha (strain DSM 101675 / C91 / Nm57).